The following is a 119-amino-acid chain: Large ribosomal subunit protein uL18 (119 aa).

It belongs to the universal ribosomal protein uL18 family. As to quaternary structure, part of the 50S ribosomal subunit; part of the 5S rRNA/L5/L18/L25 subcomplex. Contacts the 5S and 23S rRNAs.

Its function is as follows. This is one of the proteins that bind and probably mediate the attachment of the 5S RNA into the large ribosomal subunit, where it forms part of the central protuberance. This chain is Large ribosomal subunit protein uL18, found in Borrelia hermsii (strain HS1 / DAH).